The primary structure comprises 357 residues: Serine proteinase inhibitor 1 (357 aa).

It belongs to the serpin family. Poxviruses subfamily.

The protein resides in the host cytoplasm. In terms of biological role, this viral protein may be involved in the regulation of the complement cascade. Involved in red pock formation. The chain is Serine proteinase inhibitor 1 (SPI-1) from Oryctolagus cuniculus (Rabbit).